Consider the following 566-residue polypeptide: Serine/threonine-protein kinase haspin homolog (566 aa).

Residues 248–566 (LLNTKKIGEG…HCANYLFNLN (319 aa)) form the Protein kinase domain. ATP-binding positions include 254–262 (IGEGAYGEV), Lys-282, 377–382 (KFAGSD), 418–423 (DLHLGN), and 456–458 (DYT). Residue Asp-418 is the Proton acceptor of the active site.

The protein belongs to the protein kinase superfamily. Ser/Thr protein kinase family. Haspin subfamily. Interacts with pds5 and vtd. It depends on Mg(2+) as a cofactor.

The protein resides in the nucleus lamina. The protein localises to the chromosome. It is found in the cytoplasm. Its subcellular location is the cytoskeleton. It localises to the spindle. It catalyses the reaction L-seryl-[protein] + ATP = O-phospho-L-seryl-[protein] + ADP + H(+). The catalysed reaction is L-threonyl-[protein] + ATP = O-phospho-L-threonyl-[protein] + ADP + H(+). Functionally, serine/threonine-protein kinase that phosphorylates histone H3 at 'Thr-4' (H3T3ph) during mitosis and interphase. Function is essential for chromosome organization during mitosis and genome organization in interphase cells, thus playing a functional role in gene regulation. During mitosis, may act through H3T3ph to both position and modulate activation of AURKB and other components of the chromosomal passenger complex (CPC) at centromeres to ensure proper chromatid cohesion, metaphase alignment and normal progression through the cell cycle. During interphase, associates with the cohesion complex and mediates pds5 binding to chromatin to ensure correct sister chromatid cohesion, chromatin organization, and also functions with Pds5-cohesin to modify Polycomb-dependent homeotic transformations. Function during interphase is required for insulator activity, nuclear compaction, heterochromatin-induced position-effect variegation and PcG-mediated pairing-sensitive silencing. This is Serine/threonine-protein kinase haspin homolog from Drosophila melanogaster (Fruit fly).